The sequence spans 482 residues: Ribosomal protein uS12 methylthiotransferase RimO (482 aa).

The MTTase N-terminal domain maps to 2–115 (MKVHIITLGC…IAEVVETFQP (114 aa)). Positions 11, 47, 79, 177, 181, and 184 each coordinate [4Fe-4S] cluster. The 232-residue stretch at 163-394 (RAVGPSAYLK…MRLQQRISRE (232 aa)) folds into the Radical SAM core domain. The TRAM domain occupies 397 to 466 (RRWLGRVVRV…DYDLWGDVVG (70 aa)).

It belongs to the methylthiotransferase family. RimO subfamily. The cofactor is [4Fe-4S] cluster.

Its subcellular location is the cytoplasm. The catalysed reaction is L-aspartate(89)-[ribosomal protein uS12]-hydrogen + (sulfur carrier)-SH + AH2 + 2 S-adenosyl-L-methionine = 3-methylsulfanyl-L-aspartate(89)-[ribosomal protein uS12]-hydrogen + (sulfur carrier)-H + 5'-deoxyadenosine + L-methionine + A + S-adenosyl-L-homocysteine + 2 H(+). In terms of biological role, catalyzes the methylthiolation of an aspartic acid residue of ribosomal protein uS12. The protein is Ribosomal protein uS12 methylthiotransferase RimO of Roseiflexus castenholzii (strain DSM 13941 / HLO8).